The following is a 517-amino-acid chain: Carotenoid phi-ring synthase (517 aa).

A disordered region spans residues 1 to 24 (MFARDSGRGHRHGRDRQAAVVPAP). FAD contacts are provided by residues A45, 64-65 (ER), R72, Y99, D461, and M472.

This sequence belongs to the carotenoid/retinoid oxidoreductase family. FAD is required as a cofactor.

The catalysed reaction is a carotenoid beta-end derivative + 2 A = a carotenoid phi-end derivative + 2 AH2. It functions in the pathway carotenoid biosynthesis. Functionally, involved in the biosynthesis of isorenieratene, a carotenoid with aromatic end groups. Catalyzes the introduction of two additional double bonds into each ionone ring of beta-carotene to produce isorenieratene. The reaction includes an intramolecular methyl transfer from position C1 to position C2 of the ring. The protein is Carotenoid phi-ring synthase of Streptomyces griseus.